The following is a 652-amino-acid chain: Acetyl-coenzyme A synthetase (652 aa).

CoA is bound by residues 191-194 (RAGR), Thr311, and Asn335. Residues 387–389 (GEP), 411–416 (DTWWQT), Asp500, and Arg515 each bind ATP. Residue Ser523 coordinates CoA. ATP is bound at residue Arg526. 3 residues coordinate Mg(2+): Val537, His539, and Ile542. Position 584 (Arg584) interacts with CoA. Residue Lys609 is modified to N6-acetyllysine.

The protein belongs to the ATP-dependent AMP-binding enzyme family. Requires Mg(2+) as cofactor. Post-translationally, acetylated. Deacetylation by the SIR2-homolog deacetylase activates the enzyme.

The catalysed reaction is acetate + ATP + CoA = acetyl-CoA + AMP + diphosphate. Catalyzes the conversion of acetate into acetyl-CoA (AcCoA), an essential intermediate at the junction of anabolic and catabolic pathways. Acs undergoes a two-step reaction. In the first half reaction, Acs combines acetate with ATP to form acetyl-adenylate (AcAMP) intermediate. In the second half reaction, it can then transfer the acetyl group from AcAMP to the sulfhydryl group of CoA, forming the product AcCoA. In terms of biological role, enables the cell to use acetate during aerobic growth to generate energy via the TCA cycle, and biosynthetic compounds via the glyoxylate shunt. Acetylates CheY, the response regulator involved in flagellar movement and chemotaxis. This chain is Acetyl-coenzyme A synthetase, found in Yersinia pseudotuberculosis serotype I (strain IP32953).